Reading from the N-terminus, the 817-residue chain is V-type proton ATPase subunit a1 (817 aa).

Residues 1 to 422 (MEEFLDKLPQ…PAVYSVVTYP (422 aa)) are Cytoplasmic-facing. Positions 97-133 (DIALGDLERQLADHEHEVLEMNSNSEKLRQTYNELLE) form a coiled coil. The chain crosses the membrane as a helical span at residues 423 to 443 (FLFAVMFGDWGHGLCLLLGAL). Over 444–468 (YLLARERKLSTQKLGSFMEMLFGGR) the chain is Vacuolar. Residues 469-489 (YVILLMALFSIYCGLIYNEFF) form a helical membrane-spanning segment. Residues 490 to 547 (SVPFHIFGGSAYKCRDTTCSDAYTVGLIKYRDPYPFGVDPSWRGSRTELPYLNSLKMK) lie on the Cytoplasmic side of the membrane. The helical transmembrane segment at 548 to 568 (MSILLGIAQMNLGLILSFFNA) threads the bilayer. The Vacuolar portion of the chain corresponds to 569–580 (RFFGSSLDIRYQ). A helical membrane pass occupies residues 581–601 (FIPQMIFLNSLFGYLSLLIII). Residues 602–639 (KWCTGSQADLYHVMIYMFLSPTEELGENELFWGQRPLQ) are Cytoplasmic-facing. Residues 640–660 (IVLLLLAFIAVPWMLFPKPFA) traverse the membrane as a helical segment. At 661–758 (LRKIHMERFQ…VLLLAWGYEN (98 aa)) the chain is on the vacuolar side. A helical membrane pass occupies residues 759 to 779 (ILIRLIGVAVFAFATAFILLM). Over 780–817 (METLSAFLHALRLHWVEFMGKFFNGDGYKFKPFSFALI) the chain is Cytoplasmic.

This sequence belongs to the V-ATPase 116 kDa subunit family. As to quaternary structure, V-ATPase is a heteromultimeric enzyme composed of a peripheral catalytic V1 complex (components A to H) attached to an integral membrane V0 proton pore complex (components: a, c, c'', d and e).

Its subcellular location is the vacuole membrane. The protein localises to the golgi apparatus. It is found in the trans-Golgi network membrane. Functionally, essential component of the vacuolar proton pump (V-ATPase), a multimeric enzyme that catalyzes the translocation of protons across the membranes. Required for assembly and activity of the V-ATPase. Required during cell expansion. The sequence is that of V-type proton ATPase subunit a1 from Arabidopsis thaliana (Mouse-ear cress).